The sequence spans 235 residues: Putative 4'-phosphopantetheinyl transferase HI_0152 (235 aa).

D112, E114, and E155 together coordinate Mg(2+).

Belongs to the P-Pant transferase superfamily. Gsp/Sfp/HetI/AcpT family. Requires Mg(2+) as cofactor.

Functionally, may transfer the 4'-phosphopantetheine moiety from coenzyme A (CoA) to a serine residue of a carrier protein domain. In Haemophilus influenzae (strain ATCC 51907 / DSM 11121 / KW20 / Rd), this protein is Putative 4'-phosphopantetheinyl transferase HI_0152.